The sequence spans 216 residues: Large ribosomal subunit protein uL3 (216 aa).

Position 157 is an N5-methylglutamine (glutamine 157).

It belongs to the universal ribosomal protein uL3 family. In terms of assembly, part of the 50S ribosomal subunit. Forms a cluster with proteins L14 and L19. Methylated by PrmB.

In terms of biological role, one of the primary rRNA binding proteins, it binds directly near the 3'-end of the 23S rRNA, where it nucleates assembly of the 50S subunit. The chain is Large ribosomal subunit protein uL3 from Xanthomonas campestris pv. campestris (strain 8004).